Here is a 362-residue protein sequence, read N- to C-terminus: tRNA-specific 2-thiouridylase MnmA (362 aa).

ATP contacts are provided by residues 8 to 15 (AMSGGVDS) and Met-35. An interaction with target base in tRNA region spans residues 95-97 (NPD). Cys-100 acts as the Nucleophile in catalysis. The cysteines at positions 100 and 196 are disulfide-linked. An ATP-binding site is contributed by Gly-124. The interval 146-148 (KDQ) is interaction with tRNA. Cys-196 functions as the Cysteine persulfide intermediate in the catalytic mechanism. An interaction with tRNA region spans residues 303–304 (RY).

It belongs to the MnmA/TRMU family.

The protein localises to the cytoplasm. It catalyses the reaction S-sulfanyl-L-cysteinyl-[protein] + uridine(34) in tRNA + AH2 + ATP = 2-thiouridine(34) in tRNA + L-cysteinyl-[protein] + A + AMP + diphosphate + H(+). Its function is as follows. Catalyzes the 2-thiolation of uridine at the wobble position (U34) of tRNA, leading to the formation of s(2)U34. The protein is tRNA-specific 2-thiouridylase MnmA of Chlamydia abortus (strain DSM 27085 / S26/3) (Chlamydophila abortus).